The primary structure comprises 94 residues: Copper resistance protein K (94 aa).

The first 20 residues, methionine 1–alanine 20, serve as a signal peptide directing secretion.

In terms of assembly, monomer in the copper-bound form. Homodimer as apoprotein. Dissociates into monomers upon copper binding.

The protein resides in the periplasm. Functionally, involved in resistance to copper. Can bind up to 2 copper ions. Has higher affinity for Cu(+) than for Cu(2+). The sequence is that of Copper resistance protein K (copK) from Cupriavidus metallidurans (strain ATCC 43123 / DSM 2839 / NBRC 102507 / CH34) (Ralstonia metallidurans).